A 575-amino-acid polypeptide reads, in one-letter code: Muellerian-inhibiting factor (575 aa).

The signal sequence occupies residues 1 to 24; the sequence is MPGPSLSLALVLSAMGALLRPGTP. Residues 25-466 constitute a propeptide that is removed on maturation; that stretch reads REEVFSTSAL…ERSGSARAQR (442 aa). Residues Asn-78 and Asn-344 are each glycosylated (N-linked (GlcNAc...) asparagine). 3 disulfides stabilise this stretch: Cys-477–Cys-541, Cys-503–Cys-572, and Cys-507–Cys-574.

Belongs to the TGF-beta family. In terms of assembly, homodimer; disulfide-linked. Post-translationally, preproprotein is proteolytically processed to generate N- and C-terminal cleavage products that homodimerize and associate to form a biologically active non-covalent complex. Binding of the non-covalent complex to AMHR2 induces dissociation of the pro-region from the mature C-terminal dimer. The N-terminal portion of the protein, despite having no intrinsic activity, has the role of amplifying the activity of the C-terminus. As to expression, expressed in fetal testis and adult ovaries.

Its subcellular location is the secreted. Functionally, plays an important role in several reproductive functions. Induces Muellerian duct regression during male fetal sexual differentiation and plays a role in Leydig cell differentiation and function. In female acts as a negative regulator of the primordial to primary follicle transition and decreases FSH sensitivity of growing follicles. AMH signals by binding to a specific type-II receptor, AMHR2, that heterodimerizes with type-I receptors (ACVR1 and BMPR1A), and recruiting SMAD proteins that are translocated to the nucleus to regulate target gene expression. This chain is Muellerian-inhibiting factor (AMH), found in Bos taurus (Bovine).